The primary structure comprises 273 residues: 2,3,4,5-tetrahydropyridine-2,6-dicarboxylate N-succinyltransferase (273 aa).

Residues Arg-104 and Asp-141 each coordinate substrate.

It belongs to the transferase hexapeptide repeat family. As to quaternary structure, homotrimer.

It localises to the cytoplasm. It catalyses the reaction (S)-2,3,4,5-tetrahydrodipicolinate + succinyl-CoA + H2O = (S)-2-succinylamino-6-oxoheptanedioate + CoA. It participates in amino-acid biosynthesis; L-lysine biosynthesis via DAP pathway; LL-2,6-diaminopimelate from (S)-tetrahydrodipicolinate (succinylase route): step 1/3. The polypeptide is 2,3,4,5-tetrahydropyridine-2,6-dicarboxylate N-succinyltransferase (Chromobacterium violaceum (strain ATCC 12472 / DSM 30191 / JCM 1249 / CCUG 213 / NBRC 12614 / NCIMB 9131 / NCTC 9757 / MK)).